Here is a 132-residue protein sequence, read N- to C-terminus: Small ribosomal subunit protein uS8 (132 aa).

The protein belongs to the universal ribosomal protein uS8 family. Part of the 30S ribosomal subunit. Contacts proteins S5 and S12.

One of the primary rRNA binding proteins, it binds directly to 16S rRNA central domain where it helps coordinate assembly of the platform of the 30S subunit. This Saccharopolyspora erythraea (strain ATCC 11635 / DSM 40517 / JCM 4748 / NBRC 13426 / NCIMB 8594 / NRRL 2338) protein is Small ribosomal subunit protein uS8.